A 382-amino-acid chain; its full sequence is Pyrimidine monooxygenase RutA (382 aa).

Residues 68 to 69 (IK), asparagine 134, glutamate 143, 159 to 160 (RY), and serine 209 contribute to the FMN site.

This sequence belongs to the NtaA/SnaA/DszA monooxygenase family. RutA subfamily.

The enzyme catalyses uracil + FMNH2 + NADH + O2 = (Z)-3-ureidoacrylate + FMN + NAD(+) + H2O + H(+). It carries out the reaction thymine + FMNH2 + NADH + O2 = (Z)-2-methylureidoacrylate + FMN + NAD(+) + H2O + H(+). In terms of biological role, catalyzes the pyrimidine ring opening between N-3 and C-4 by an unusual flavin hydroperoxide-catalyzed mechanism, adding oxygen atoms in the process to yield ureidoacrylate peracid, that immediately reacts with FMN forming ureidoacrylate and FMN-N(5)-oxide. The FMN-N(5)-oxide reacts spontaneously with NADH to produce FMN. Requires the flavin reductase RutF to regenerate FMN in vivo. This Escherichia coli O157:H7 protein is Pyrimidine monooxygenase RutA (rutA).